Here is a 537-residue protein sequence, read N- to C-terminus: CTP synthase (537 aa).

The tract at residues 1–268 is amidoligase domain; sequence MPAKFIFVTG…DSIVVERLKL (268 aa). Ser-14 is a CTP binding site. Ser-14 provides a ligand contact to UTP. 15–20 contacts ATP; the sequence is SLGKGI. Tyr-55 is an L-glutamine binding site. Asp-72 contacts ATP. Mg(2+) is bound by residues Asp-72 and Glu-142. CTP-binding positions include 149–151, 189–194, and Lys-225; these read DIE and KTKPTQ. Residues 189 to 194 and Lys-225 contribute to the UTP site; that span reads KTKPTQ. Positions 293–534 constitute a Glutamine amidotransferase type-1 domain; sequence EIALVGKYVT…IGAACRRAGG (242 aa). Residue Gly-354 participates in L-glutamine binding. Catalysis depends on Cys-381, which acts as the Nucleophile; for glutamine hydrolysis. L-glutamine-binding positions include 382–385, Glu-405, and Arg-462; that span reads LGMQ. Catalysis depends on residues His-507 and Glu-509.

This sequence belongs to the CTP synthase family. As to quaternary structure, homotetramer.

The enzyme catalyses UTP + L-glutamine + ATP + H2O = CTP + L-glutamate + ADP + phosphate + 2 H(+). The catalysed reaction is L-glutamine + H2O = L-glutamate + NH4(+). It carries out the reaction UTP + NH4(+) + ATP = CTP + ADP + phosphate + 2 H(+). It participates in pyrimidine metabolism; CTP biosynthesis via de novo pathway; CTP from UDP: step 2/2. Its activity is regulated as follows. Allosterically activated by GTP, when glutamine is the substrate; GTP has no effect on the reaction when ammonia is the substrate. The allosteric effector GTP functions by stabilizing the protein conformation that binds the tetrahedral intermediate(s) formed during glutamine hydrolysis. Inhibited by the product CTP, via allosteric rather than competitive inhibition. In terms of biological role, catalyzes the ATP-dependent amination of UTP to CTP with either L-glutamine or ammonia as the source of nitrogen. Regulates intracellular CTP levels through interactions with the four ribonucleotide triphosphates. The sequence is that of CTP synthase from Moorella thermoacetica (strain ATCC 39073 / JCM 9320).